The sequence spans 387 residues: Exodeoxyribonuclease 7 large subunit (387 aa).

Belongs to the XseA family. Heterooligomer composed of large and small subunits.

Its subcellular location is the cytoplasm. The enzyme catalyses Exonucleolytic cleavage in either 5'- to 3'- or 3'- to 5'-direction to yield nucleoside 5'-phosphates.. Functionally, bidirectionally degrades single-stranded DNA into large acid-insoluble oligonucleotides, which are then degraded further into small acid-soluble oligonucleotides. This Campylobacter jejuni subsp. jejuni serotype O:6 (strain 81116 / NCTC 11828) protein is Exodeoxyribonuclease 7 large subunit.